The primary structure comprises 605 residues: Alpha-1,3-galactosidase A (605 aa).

A signal peptide spans 1 to 20 (MKKYLHILPACFLFYAAAHA). PbH1 repeat units lie at residues 256 to 278 (SKNI…VSQY), 312 to 334 (KGKV…NVHG), 421 to 443 (TPEV…LVTT), 444 to 466 (PRKV…LIEA), 477 to 507 (VKDV…HPSN), and 517 to 547 (HQNI…LFRN).

The protein belongs to the glycosyl hydrolase 110 family. A subfamily.

It catalyses the reaction Hydrolysis of terminal, non-reducing branched (1-&gt;3)-alpha-D-galactosidic residues, producing free D-galactose.. The catalysed reaction is Hydrolysis of terminal, non-reducing alpha-D-galactose residues in alpha-D-galactosides, including galactose oligosaccharides, galactomannans and galactolipids.. Its function is as follows. Alpha-galactosidase that specifically removes branched alpha-1,3-linked galactose residues present in blood group B antigens. Has no activity toward linear alpha-1,3-linked galactose residues. This Bacteroides fragilis (strain YCH46) protein is Alpha-1,3-galactosidase A (glaA).